Reading from the N-terminus, the 342-residue chain is scyllo-inositol 2-dehydrogenase (NAD(+)) (342 aa).

It belongs to the Gfo/Idh/MocA family.

The catalysed reaction is scyllo-inositol + NAD(+) = scyllo-inosose + NADH + H(+). It participates in polyol metabolism. Functionally, catalyzes the reversible NAD(+)-dependent oxidation of scyllo-inositol (SI) to 2,4,6/3,5-pentahydroxycyclohexanone (scyllo-inosose or SIS). Is required for SI catabolism that allows B.subtilis to utilize SI as the sole carbon source for growth. Cannot use NADP(+) instead of NAD(+). In Bacillus subtilis (strain 168), this protein is scyllo-inositol 2-dehydrogenase (NAD(+)).